Here is a 275-residue protein sequence, read N- to C-terminus: Glucosamine-6-phosphate deaminase 2 (275 aa).

The Proton acceptor; for enolization step role is filled by aspartate 72. Positions 102-131 (NNAHILDGNASDLQAECEDFERKIKEAGGI) form a coiled coil. Aspartate 141 acts as the For ring-opening step in catalysis. The Proton acceptor; for ring-opening step role is filled by histidine 143. The For ring-opening step role is filled by glutamate 148.

This sequence belongs to the glucosamine/galactosamine-6-phosphate isomerase family. In terms of assembly, homohexamer.

It localises to the cytoplasm. It catalyses the reaction alpha-D-glucosamine 6-phosphate + H2O = beta-D-fructose 6-phosphate + NH4(+). Catalyzes the reversible conversion of alpha-D-glucosamine 6-phosphate (GlcN-6P) into beta-D-fructose 6-phosphate (Fru-6P) and ammonium ion, a regulatory reaction step in de novo uridine diphosphate-N-acetyl-alpha-D-glucosamine (UDP-GlcNAc) biosynthesis via hexosamine pathway. The chain is Glucosamine-6-phosphate deaminase 2 from Xenopus laevis (African clawed frog).